Reading from the N-terminus, the 96-residue chain is UPF0235 protein YggU (96 aa).

It belongs to the UPF0235 family.

The chain is UPF0235 protein YggU from Salmonella newport (strain SL254).